We begin with the raw amino-acid sequence, 124 residues long: Apolipoprotein C-IV (124 aa).

The signal sequence occupies residues 1 to 27; it reads MLLPRRGLRTLPSLCLYILVLVWVVAC.

This sequence belongs to the apolipoprotein C4 family. In terms of processing, glycosylated; contains sialic acid. Present in up to five sialylated isoforms. As to expression, blood plasma, associated primarily with VLDL and HDL. Expressed mainly in the liver.

Its subcellular location is the secreted. Functionally, may participate in lipoprotein metabolism. The sequence is that of Apolipoprotein C-IV (APOC4) from Oryctolagus cuniculus (Rabbit).